A 122-amino-acid chain; its full sequence is MSLTNEQIVDAIAEKSLMEVMELVKAIEDKFGVSAAAPVAAAAAAGPAAVVEEQTEFTVVLTNPGLNKVTAIKAVRGVTGLGLKEAKDLTEAGGILKEGVSKDEAEKIKKEMTEAGATVEVK.

It belongs to the bacterial ribosomal protein bL12 family. Homodimer. Part of the ribosomal stalk of the 50S ribosomal subunit. Forms a multimeric L10(L12)X complex, where L10 forms an elongated spine to which 2 to 4 L12 dimers bind in a sequential fashion. Binds GTP-bound translation factors.

In terms of biological role, forms part of the ribosomal stalk which helps the ribosome interact with GTP-bound translation factors. Is thus essential for accurate translation. The polypeptide is Large ribosomal subunit protein bL12 (Xanthomonas oryzae pv. oryzae (strain MAFF 311018)).